A 525-amino-acid chain; its full sequence is Protein ea59 (525 aa).

This is Protein ea59 (ea59) from Escherichia coli (Bacteriophage lambda).